A 207-amino-acid polypeptide reads, in one-letter code: Probable GTP-binding protein EngB (207 aa).

Positions 22–194 (DLPEVAFAGR…LQRLDVALSD (173 aa)) constitute an EngB-type G domain. GTP is bound by residues 30–37 (GRSNVGKS), 57–61 (GRTQL), 75–78 (DLPG), 142–145 (TKVD), and 173–175 (FSA). Ser-37 and Thr-59 together coordinate Mg(2+).

The protein belongs to the TRAFAC class TrmE-Era-EngA-EngB-Septin-like GTPase superfamily. EngB GTPase family. It depends on Mg(2+) as a cofactor.

Its function is as follows. Necessary for normal cell division and for the maintenance of normal septation. In Syntrophotalea carbinolica (strain DSM 2380 / NBRC 103641 / GraBd1) (Pelobacter carbinolicus), this protein is Probable GTP-binding protein EngB.